The primary structure comprises 445 residues: Chromosome partition protein MukF (445 aa).

The leucine-zipper stretch occupies residues 212 to 240; sequence LDETSGNLRELQDTLNAAGDKLQEQLLRI.

It belongs to the MukF family. As to quaternary structure, interacts, and probably forms a ternary complex, with MukE and MukB via its C-terminal region. The complex formation is stimulated by calcium or magnesium. It is required for an interaction between MukE and MukB.

It is found in the cytoplasm. Its subcellular location is the nucleoid. Involved in chromosome condensation, segregation and cell cycle progression. May participate in facilitating chromosome segregation by condensation DNA from both sides of a centrally located replisome during cell division. Not required for mini-F plasmid partitioning. Probably acts via its interaction with MukB and MukE. Overexpression results in anucleate cells. It has a calcium binding activity. The chain is Chromosome partition protein MukF from Mannheimia succiniciproducens (strain KCTC 0769BP / MBEL55E).